Consider the following 430-residue polypeptide: 3-phosphoshikimate 1-carboxyvinyltransferase (430 aa).

Residues Lys-20, Ser-21, and Arg-25 each contribute to the 3-phosphoshikimate site. Lys-20 contacts phosphoenolpyruvate. Phosphoenolpyruvate contacts are provided by Gly-92 and Arg-120. 3-phosphoshikimate contacts are provided by Ser-166, Gln-168, Asp-312, and Lys-339. Gln-168 lines the phosphoenolpyruvate pocket. Asp-312 serves as the catalytic Proton acceptor. Residues Arg-343 and Arg-387 each coordinate phosphoenolpyruvate.

Belongs to the EPSP synthase family. Monomer.

It is found in the cytoplasm. The catalysed reaction is 3-phosphoshikimate + phosphoenolpyruvate = 5-O-(1-carboxyvinyl)-3-phosphoshikimate + phosphate. Its pathway is metabolic intermediate biosynthesis; chorismate biosynthesis; chorismate from D-erythrose 4-phosphate and phosphoenolpyruvate: step 6/7. Catalyzes the transfer of the enolpyruvyl moiety of phosphoenolpyruvate (PEP) to the 5-hydroxyl of shikimate-3-phosphate (S3P) to produce enolpyruvyl shikimate-3-phosphate and inorganic phosphate. This is 3-phosphoshikimate 1-carboxyvinyltransferase from Lactococcus lactis subsp. cremoris (strain SK11).